We begin with the raw amino-acid sequence, 172 residues long: Cytochrome b6-f complex iron-sulfur subunit (172 aa).

The chain crosses the membrane as a helical span at residues 17-39 (VFLNALLSSSVGVVVVGTLYPVV). The Rieske domain occupies 61-161 (GKPISVSELL…ATVDGDNVRF (101 aa)). Cys107, His109, Cys125, and His128 together coordinate [2Fe-2S] cluster. Cys112 and Cys127 are disulfide-bonded.

This sequence belongs to the Rieske iron-sulfur protein family. As to quaternary structure, the 4 large subunits of the cytochrome b6-f complex are cytochrome b6, subunit IV (17 kDa polypeptide, PetD), cytochrome f and the Rieske protein, while the 4 small subunits are PetG, PetL, PetM and PetN. The complex functions as a dimer. It depends on [2Fe-2S] cluster as a cofactor.

It is found in the cellular thylakoid membrane. It catalyses the reaction 2 oxidized [plastocyanin] + a plastoquinol + 2 H(+)(in) = 2 reduced [plastocyanin] + a plastoquinone + 4 H(+)(out). Its function is as follows. Component of the cytochrome b6-f complex, which mediates electron transfer between photosystem II (PSII) and photosystem I (PSI), cyclic electron flow around PSI, and state transitions. The sequence is that of Cytochrome b6-f complex iron-sulfur subunit from Synechococcus sp. (strain JA-3-3Ab) (Cyanobacteria bacterium Yellowstone A-Prime).